We begin with the raw amino-acid sequence, 181 residues long: HGPRTase-like protein 2 (181 aa).

Belongs to the purine/pyrimidine phosphoribosyltransferase family. Archaeal HPRT subfamily.

May catalyze a purine salvage reaction, the substrate is unknown. The sequence is that of HGPRTase-like protein 2 from Haloterrigena turkmenica (strain ATCC 51198 / DSM 5511 / JCM 9101 / NCIMB 13204 / VKM B-1734 / 4k) (Halococcus turkmenicus).